The following is a 436-amino-acid chain: Protein FAM83A (436 aa).

Positions 1-298 are DUF1669; sequence MSRSRHVGKI…LYASSKPLMG (298 aa). The tract at residues 73–95 is disordered; the sequence is AQAKEPPDAPDSAGGAESGPRGL. Serine 301, serine 329, serine 350, and serine 359 each carry phosphoserine. The tract at residues 302 to 371 is disordered; it reads PRLVAPFQPN…APIPPTVPRL (70 aa). Polar residues predominate over residues 321-349; sequence LSGTSDSASDRTSSNPFSSLSTGSNAHNQ. Residues 350–359 are compositionally biased toward low complexity; sequence SLSTSSGPSS.

Belongs to the FAM83 family. In terms of assembly, directly interacts (via DUF1669) with casein kinase isoforms CSNK1A1, CSNK1A1L, CSNK1D and CSNK1E. Post-translationally, may be phosphorylated upon EGFR activation. As to expression, widely expressed, with relatively higher expression levels in adipose tissues, especially in epididymal and inguinal white adipose tissue (at protein level).

It is found in the cytoplasm. The protein localises to the mitochondrion. Its function is as follows. Involved in mitochondrial maintenance during adipogenesis. May be acting by playing a role in the maintenance of normal mitochondrial function. This chain is Protein FAM83A, found in Mus musculus (Mouse).